The following is a 166-amino-acid chain: MQIFIKESTNKKEWFILDLQGHLEYTGDLKNETLGILTKKPNTKDDFSFQIGNSVLVGKRVPLKKPLLVIKKSKLNNNNNSNNNNKMAVDNKDNKDNEKDKEVEYSIEGICNDKIQFTTRPTTFIPQSSVVYGSPTHKSPSSSPKTISPVKVSPTSSPIKNPEFNN.

Positions serine 73–alanine 88 are enriched in low complexity. Disordered stretches follow at residues serine 73–lysine 101 and proline 126–asparagine 166. A compositionally biased stretch (basic and acidic residues) spans valine 89–lysine 101. A compositionally biased stretch (low complexity) spans serine 134–proline 154. A compositionally biased stretch (polar residues) spans threonine 155–asparagine 166.

This is an uncharacterized protein from Dictyostelium discoideum (Social amoeba).